A 294-amino-acid polypeptide reads, in one-letter code: Glycine--tRNA ligase alpha subunit (294 aa).

This sequence belongs to the class-II aminoacyl-tRNA synthetase family. Tetramer of two alpha and two beta subunits.

The protein localises to the cytoplasm. It catalyses the reaction tRNA(Gly) + glycine + ATP = glycyl-tRNA(Gly) + AMP + diphosphate. In Nostoc sp. (strain PCC 7120 / SAG 25.82 / UTEX 2576), this protein is Glycine--tRNA ligase alpha subunit.